The following is a 223-amino-acid chain: Gastrula zinc finger protein XlCGF52.1 (223 aa).

8 C2H2-type zinc fingers span residues 6 to 27, 33 to 55, 61 to 83, 89 to 111, 117 to 139, 145 to 167, 173 to 195, and 201 to 223; these read FTCPECGKRFSQKSNCWHTEDH, FTCMECSKSFTVKSSLLSHQRVH, YTCTQCNKQFSHSAQLRAHISTH, FPCTECSKTFSLKHKLYKHQRIH, FQCLECGKSFSVKHGLLKHQRSH, YACSECQKTFAHKTTLMVHERIH, YECNDCGKRFIHSTNLNCHQKIH, and FTCTECGKSFSLKNKLVRHQKIH.

This sequence belongs to the krueppel C2H2-type zinc-finger protein family.

The protein resides in the nucleus. Functionally, may be involved in transcriptional regulation. In Xenopus laevis (African clawed frog), this protein is Gastrula zinc finger protein XlCGF52.1.